The primary structure comprises 399 residues: Imidazolonepropionase (399 aa).

His-74 and His-76 together coordinate Fe(3+). His-74 and His-76 together coordinate Zn(2+). Arg-83, Tyr-146, and His-176 together coordinate 4-imidazolone-5-propanoate. N-formimidoyl-L-glutamate is bound at residue Tyr-146. His-238 is a Fe(3+) binding site. Position 238 (His-238) interacts with Zn(2+). Gln-241 contributes to the 4-imidazolone-5-propanoate binding site. A Fe(3+)-binding site is contributed by Asp-312. Asp-312 contributes to the Zn(2+) binding site. Residues Asn-314 and Gly-316 each coordinate N-formimidoyl-L-glutamate. Ser-317 is a binding site for 4-imidazolone-5-propanoate.

This sequence belongs to the metallo-dependent hydrolases superfamily. HutI family. Zn(2+) serves as cofactor. The cofactor is Fe(3+).

Its subcellular location is the cytoplasm. The enzyme catalyses 4-imidazolone-5-propanoate + H2O = N-formimidoyl-L-glutamate. The protein operates within amino-acid degradation; L-histidine degradation into L-glutamate; N-formimidoyl-L-glutamate from L-histidine: step 3/3. Functionally, catalyzes the hydrolytic cleavage of the carbon-nitrogen bond in imidazolone-5-propanoate to yield N-formimidoyl-L-glutamate. It is the third step in the universal histidine degradation pathway. The polypeptide is Imidazolonepropionase (Deinococcus deserti (strain DSM 17065 / CIP 109153 / LMG 22923 / VCD115)).